A 30-amino-acid polypeptide reads, in one-letter code: Photosystem II reaction center protein Psb30 (30 aa).

Topologically, residues E1–L6 are lumenal. A helical membrane pass occupies residues T7–F21. Residues L22–L30 are Cytoplasmic-facing.

It belongs to the Psb30/Ycf12 family. As to quaternary structure, PSII is composed of 1 copy each of membrane proteins PsbA, PsbB, PsbC, PsbD, PsbE, PsbF, PsbH, PsbI, PsbJ, PsbK, PsbL, PsbM, PsbT, PsbX, PsbY, PsbZ, Psb30/Ycf12, peripheral proteins PsbO, CyanoQ (PsbQ), PsbU, PsbV and a large number of cofactors. It forms dimeric complexes. PSII binds multiple chlorophylls, carotenoids and specific lipids. is required as a cofactor.

It localises to the cellular thylakoid membrane. A core subunit of photosystem II (PSII), probably helps stabilize the reaction center. PSII is a light-driven water plastoquinone oxidoreductase, using light energy to abstract electrons from H(2)O, generating a proton gradient subsequently used for ATP formation. This chain is Photosystem II reaction center protein Psb30, found in Thermostichus vulcanus (Synechococcus vulcanus).